Here is a 355-residue protein sequence, read N- to C-terminus: Daphnetin O-methyltransferase 1 (355 aa).

Residues Asp222, Asp242, and Lys256 each contribute to the S-adenosyl-L-homocysteine site. His260 (proton acceptor) is an active-site residue.

The protein belongs to the class I-like SAM-binding methyltransferase superfamily. Cation-independent O-methyltransferase family. COMT subfamily.

The catalysed reaction is 7,8-dihydroxycoumarin + S-adenosyl-L-methionine = 7-hydroxy-8-methoxycoumarin + S-adenosyl-L-homocysteine + H(+). It functions in the pathway aromatic compound metabolism. The protein operates within secondary metabolite biosynthesis. Its function is as follows. O-methyltransferase involved in the biosynthesis of coumarins natural products such as daphnetin derivatives. Catalyzes specifically the methylation of daphnetin (7,8-dihydroxycoumarin) to produce hydrangetin (7-hydroxy-8-methoxycoumarin). Probably involved in acclimation to low temperature conditions. This is Daphnetin O-methyltransferase 1 from Secale cereale (Rye).